The primary structure comprises 167 residues: Interferon gamma (167 aa).

Residues 1–23 (MSYTSYILAFQLCLILGSYGCYC) form the signal peptide. Q24 is modified (pyrrolidone carboxylic acid). N41, N108, and N117 each carry an N-linked (GlcNAc...) asparagine glycan.

Belongs to the type II (or gamma) interferon family. Homodimer. Interacts with IFNGR1 (via extracellular domain); this interaction promotes IFNGR1 dimerization. As to expression, released primarily from activated T lymphocytes.

It is found in the secreted. Type II interferon produced by immune cells such as T-cells and NK cells that plays crucial roles in antimicrobial, antiviral, and antitumor responses by activating effector immune cells and enhancing antigen presentation. Primarily signals through the JAK-STAT pathway after interaction with its receptor IFNGR1 to affect gene regulation. Upon IFNG binding, IFNGR1 intracellular domain opens out to allow association of downstream signaling components JAK2, JAK1 and STAT1, leading to STAT1 activation, nuclear translocation and transcription of IFNG-regulated genes. Many of the induced genes are transcription factors such as IRF1 that are able to further drive regulation of a next wave of transcription. Plays a role in class I antigen presentation pathway by inducing a replacement of catalytic proteasome subunits with immunoproteasome subunits. In turn, increases the quantity, quality, and repertoire of peptides for class I MHC loading. Increases the efficiency of peptide generation also by inducing the expression of activator PA28 that associates with the proteasome and alters its proteolytic cleavage preference. Up-regulates as well MHC II complexes on the cell surface by promoting expression of several key molecules such as cathepsins B/CTSB, H/CTSH, and L/CTSL. Participates in the regulation of hematopoietic stem cells during development and under homeostatic conditions by affecting their development, quiescence, and differentiation. The sequence is that of Interferon gamma (IFNG) from Oryctolagus cuniculus (Rabbit).